A 72-amino-acid chain; its full sequence is Lantibiotic lichenicidin VK21 A2 (72 aa).

Positions M1–G21 are disordered. The propeptide occupies M1 to E40. T41 carries the 2-oxobutanoic acid modification. (Z)-2,3-didehydrobutyrine occurs at positions 42, 45, and 46. Residues S47–C51 constitute a cross-link (lanthionine (Ser-Cys)). S48 is subject to 2,3-didehydroalanine (Ser). T53 and T57 each carry (Z)-2,3-didehydrobutyrine. A cross-link (lanthionine (Ser-Cys)) is located at residues S59–C63. Cross-links (beta-methyllanthionine (Thr-Cys)) lie at residues T65–C68 and T69–C72. T66 carries the post-translational modification (Z)-2,3-didehydrobutyrine.

Maturation of lantibiotics involves the enzymatic conversion of Thr, and Ser into dehydrated AA and the formation of thioether bonds with cysteine. This is followed by membrane translocation and cleavage of the modified precursor. Post-translationally, the 2,3-didehydrobutyrines are determined to be the Z-isomers.

The protein localises to the secreted. Lanthionine-containing peptide antibiotic (lantibiotic) active on Gram-positive bacteria. The bactericidal activity of lantibiotics is based on depolarization of energized bacterial cytoplasmic membranes, initiated by the formation of aqueous transmembrane pores. When present individually, LchA2 exhibits activity towards B.subtilis L1 (IC(50)=30 uM), Rhodococcus sp. SS2 (IC(50)=16.6 uM), M.luteus B1314 (IC(50)=2.6 uM), B.megaterium VKM41 (IC(50)=2 uM), S.aureus 209p (IC(50)=20 uM), B.pumilus 2001, B.globigii I, B.amyloliquefaciens I, M.smegmatis 1171 and M.phlei 1291. However, when combined with LchA1, it displays much stronger activity against B.subtilis L1 (IC(50)=0.64 uM), Rhodococcus sp. SS2 (IC(50)=0.64 uM), M.luteus B1314 (IC(50)=0.09 uM), B.megaterium VKM41 (IC(50)=0.12 uM) and S.aureus 209p (IC(50)=0.64 uM). The activity of the combined LchA1 and LchA2 peptides is strongest at a molar ratio of 1. Even when applied at 17-fold concentration of the highest IC(50) values for Gram-positive bacteria, neither the individual nor the combined peptides display activity against Gram-negative bacteria P.aeruginosa PAO1, P.putida I-97 or E.coli C600. The protein is Lantibiotic lichenicidin VK21 A2 of Bacillus licheniformis.